The chain runs to 680 residues: MALDKLDLYVIIVLAVAVAAYFAKNQFLDQPQDTGFLSNDTAGGNSRDILETLKKNNKNTLLLFGSQTGTAEDYANKLSREIHSRFGLKTMVADFADYDWDNFGDIPNDILVFFIVATYGEGEPTDNADEFHTWLTDEADTLSTLRYTVFGLGNSTYEFYNAIGRKFDRLLEEKGGERFADYGEGDDGTGTLDEDFLTWKDNVFDTLKNDLNFEERELKYEPNVKLTERDDLTVDDSEVSLGEPNKKYIQSEEIDLTKGPFDHTHPYLAKISKTRELFASKERNCVHVEFDVSESNLKYTTGDHLAVWPSNSDENIAKFIKCFGLDDKINTVFELKALDSTYQIPFPNPITYGAVVRHHLEISGPVSRQFFLAIAGFAPDEETKKTFTRIGNDKQEFANKITRKKLNVADALLFASNGRPWSDVPFEFIIENVPHLQPRYYSISSSSLSEKQTINITAVVEVEEEADGRAVTGVVTNLLKNIEIEQNKTGEKPVVHYDLSGPRNKFNKFKLPVHVRRSNFKLPKNTTTPVILIGPGTGVAPLRGFVRERVQQVKNGVNVGKTVLFYGCRNEHDDFLYKQEWSEYASVLGENFEMFTAFSRQDPSKKVYVQDKIAENSKVVNDLLNEGAIIYVCGDASRMARDVQSTIAKIVAKHREIQEDKAVELVKSWKVQNRYQEDVW.

The Lumenal segment spans residues 1–5 (MALDK). The helical transmembrane segment at 6-23 (LDLYVIIVLAVAVAAYFA) threads the bilayer. Topologically, residues 24-680 (KNQFLDQPQD…VQNRYQEDVW (657 aa)) are cytoplasmic. The region spanning 60–204 (TLLLFGSQTG…DFLTWKDNVF (145 aa)) is the Flavodoxin-like domain. FMN-binding positions include 66–71 (SQTGTA), 117–120 (ATYG), 152–161 (LGNSTYEFYN), and Asp187. The FAD-binding FR-type domain maps to 264 to 509 (THPYLAKISK…SGPRNKFNKF (246 aa)). Arg283 lines the NADP(+) pocket. Residues 439-442 (RYYS), 457-459 (TAV), and 473-476 (GVVT) each bind FAD. Residues Thr537, 599–600 (SR), 606–610 (KVYVQ), and Asp642 each bind NADP(+). Trp680 serves as a coordination point for FAD.

Belongs to the NADPH--cytochrome P450 reductase family. This sequence in the N-terminal section; belongs to the flavodoxin family. The protein in the C-terminal section; belongs to the flavoprotein pyridine nucleotide cytochrome reductase family. FAD serves as cofactor. Requires FMN as cofactor.

The protein localises to the endoplasmic reticulum membrane. The protein resides in the mitochondrion outer membrane. It localises to the cell membrane. It carries out the reaction 2 oxidized [cytochrome P450] + NADPH = 2 reduced [cytochrome P450] + NADP(+) + H(+). Its function is as follows. This enzyme is required for electron transfer from NADP to cytochrome P450 in microsomes. It can also provide electron transfer to heme oxygenase and cytochrome B5. Involved in ergosterol biosynthesis. The polypeptide is NADPH--cytochrome P450 reductase (Candida maltosa (Yeast)).